The chain runs to 96 residues: ATP synthase subunit f, mitochondrial (96 aa).

It belongs to the ATPase F chain family.

The protein resides in the mitochondrion. It localises to the mitochondrion inner membrane. Mitochondrial membrane ATP synthase (F(1)F(0) ATP synthase or Complex V) produces ATP from ADP in the presence of a proton gradient across the membrane which is generated by electron transport complexes of the respiratory chain. F-type ATPases consist of two structural domains, F(1) - containing the extramembraneous catalytic core and F(0) - containing the membrane proton channel, linked together by a central stalk and a peripheral stalk. During catalysis, ATP synthesis in the catalytic domain of F(1) is coupled via a rotary mechanism of the central stalk subunits to proton translocation. This is ATP synthase subunit f, mitochondrial (atp17) from Schizosaccharomyces pombe (strain 972 / ATCC 24843) (Fission yeast).